Here is a 757-residue protein sequence, read N- to C-terminus: Xaa-Pro dipeptidyl-peptidase (757 aa).

Active-site charge relay system residues include Ser348, Asp468, and His498.

Belongs to the peptidase S15 family. As to quaternary structure, homodimer.

It localises to the cytoplasm. The catalysed reaction is Hydrolyzes Xaa-Pro-|- bonds to release unblocked, N-terminal dipeptides from substrates including Ala-Pro-|-p-nitroanilide and (sequentially) Tyr-Pro-|-Phe-Pro-|-Gly-Pro-|-Ile.. In terms of biological role, removes N-terminal dipeptides sequentially from polypeptides having unsubstituted N-termini provided that the penultimate residue is proline. The chain is Xaa-Pro dipeptidyl-peptidase from Streptococcus pneumoniae (strain P1031).